Reading from the N-terminus, the 260-residue chain is Hydroxyethylthiazole kinase (260 aa).

Met-38 is a binding site for substrate. Positions 114 and 159 each coordinate ATP. A substrate-binding site is contributed by Gly-186.

The protein belongs to the Thz kinase family. Requires Mg(2+) as cofactor.

It carries out the reaction 5-(2-hydroxyethyl)-4-methylthiazole + ATP = 4-methyl-5-(2-phosphooxyethyl)-thiazole + ADP + H(+). The protein operates within cofactor biosynthesis; thiamine diphosphate biosynthesis; 4-methyl-5-(2-phosphoethyl)-thiazole from 5-(2-hydroxyethyl)-4-methylthiazole: step 1/1. Catalyzes the phosphorylation of the hydroxyl group of 4-methyl-5-beta-hydroxyethylthiazole (THZ). In Helicobacter pylori (strain G27), this protein is Hydroxyethylthiazole kinase.